Reading from the N-terminus, the 464-residue chain is MIPVRGFSGETIAVLGLGRSGLATARALRAGGATPLCWDDNTEARARAEAEGFACAPLKHADAFDGVAALITSPGIPHLYPTPNPTIALAMSLGIPVDNDIGLFFRSFATPDWDEFDSLPRVIAVTGSNGKSTTSALIHHVLTAAGRPTQLAGNIGRGVLDIDPGEDGGIVVLELSSYQTELARALTPDIAVFTNLSPDHLDRHGGMGGYFAAKRRLFTIGGPDRAVIGTDEPEGLFLASQLSVAPADDRVIRVTSAKPSGPGWVVSARKGFLAEHRKGRQTGSIDLRPIPGLPGAHNHQNAACAYAACRSLGLAPRQIEAGFASFKGLPHRSQIVGTANGVTFVNDSKATNVDSAAKALQAFDRIRWIAGGLEKEGGLAALTPHLGGVRKAYLIGRSAAEFALGIPDTPHEVCETMARAVAAAVAEAEPGDTILLAPAAASFDQYDNFERRGEDFIAEVAKYL.

Residue glycine 127 to threonine 133 participates in ATP binding.

Belongs to the MurCDEF family.

The protein resides in the cytoplasm. It catalyses the reaction UDP-N-acetyl-alpha-D-muramoyl-L-alanine + D-glutamate + ATP = UDP-N-acetyl-alpha-D-muramoyl-L-alanyl-D-glutamate + ADP + phosphate + H(+). The protein operates within cell wall biogenesis; peptidoglycan biosynthesis. Functionally, cell wall formation. Catalyzes the addition of glutamate to the nucleotide precursor UDP-N-acetylmuramoyl-L-alanine (UMA). The sequence is that of UDP-N-acetylmuramoylalanine--D-glutamate ligase from Dinoroseobacter shibae (strain DSM 16493 / NCIMB 14021 / DFL 12).